The following is a 758-amino-acid chain: Xaa-Pro dipeptidyl-peptidase (758 aa).

Catalysis depends on charge relay system residues S349, D469, and H499.

The protein belongs to the peptidase S15 family. In terms of assembly, homodimer.

The protein localises to the cytoplasm. The enzyme catalyses Hydrolyzes Xaa-Pro-|- bonds to release unblocked, N-terminal dipeptides from substrates including Ala-Pro-|-p-nitroanilide and (sequentially) Tyr-Pro-|-Phe-Pro-|-Gly-Pro-|-Ile.. Its function is as follows. Removes N-terminal dipeptides sequentially from polypeptides having unsubstituted N-termini provided that the penultimate residue is proline. The polypeptide is Xaa-Pro dipeptidyl-peptidase (Streptococcus uberis (strain ATCC BAA-854 / 0140J)).